The chain runs to 371 residues: Putative glutamate--cysteine ligase 2 (371 aa).

This sequence belongs to the glutamate--cysteine ligase type 2 family. YbdK subfamily.

The catalysed reaction is L-cysteine + L-glutamate + ATP = gamma-L-glutamyl-L-cysteine + ADP + phosphate + H(+). Functionally, ATP-dependent carboxylate-amine ligase which exhibits weak glutamate--cysteine ligase activity. This Burkholderia lata (strain ATCC 17760 / DSM 23089 / LMG 22485 / NCIMB 9086 / R18194 / 383) protein is Putative glutamate--cysteine ligase 2.